Reading from the N-terminus, the 151-residue chain is Probable desiccation-related protein LEA14 (151 aa).

It belongs to the LEA type 2 family.

The protein is Probable desiccation-related protein LEA14 (LEA14) of Arabidopsis thaliana (Mouse-ear cress).